The following is a 586-amino-acid chain: Aspartate--tRNA(Asp/Asn) ligase (586 aa).

Residue glutamate 176 participates in L-aspartate binding. The segment at 200-203 (QIFK) is aspartate. Arginine 222 serves as a coordination point for L-aspartate. ATP is bound by residues 222 to 224 (RDE) and glutamine 231. Histidine 449 is a binding site for L-aspartate. Glutamate 483 contacts ATP. Residue arginine 490 coordinates L-aspartate. 535-538 (GIDR) serves as a coordination point for ATP.

The protein belongs to the class-II aminoacyl-tRNA synthetase family. Type 1 subfamily. In terms of assembly, homodimer.

The protein resides in the cytoplasm. The catalysed reaction is tRNA(Asx) + L-aspartate + ATP = L-aspartyl-tRNA(Asx) + AMP + diphosphate. Functionally, aspartyl-tRNA synthetase with relaxed tRNA specificity since it is able to aspartylate not only its cognate tRNA(Asp) but also tRNA(Asn). Reaction proceeds in two steps: L-aspartate is first activated by ATP to form Asp-AMP and then transferred to the acceptor end of tRNA(Asp/Asn). The sequence is that of Aspartate--tRNA(Asp/Asn) ligase from Brachyspira hyodysenteriae (strain ATCC 49526 / WA1).